The sequence spans 417 residues: Phosphoglycerate kinase (417 aa).

Positions 23, 24, 25, 26, 39, 40, 63, 64, 66, 67, 122, 123, 170, and 171 each coordinate (2R)-3-phosphoglycerate. Glycine 214 serves as a coordination point for ADP. Glycine 214 contributes to the CDP binding site. 2 residues coordinate AMP: alanine 215 and lysine 216. Alanine 215 is an ATP binding site. Alanine 215 contributes to the Mg(2+) binding site. CDP is bound at residue aspartate 219. Aspartate 219 contributes to the Mg(2+) binding site. Residue lysine 220 coordinates AMP. An ATP-binding site is contributed by lysine 220. Glycine 238 is an ADP binding site. A CDP-binding site is contributed by glycine 238. 2 residues coordinate AMP: glycine 239 and glycine 313. 2 residues coordinate ATP: glycine 239 and glycine 313. Residues glycine 338 and phenylalanine 343 each coordinate CDP. Residue phenylalanine 343 coordinates ADP. Glutamate 344 contacts AMP. Residues glutamate 344, aspartate 375, and threonine 376 each contribute to the ATP site. Position 375 (aspartate 375) interacts with Mg(2+).

It belongs to the phosphoglycerate kinase family. As to quaternary structure, monomer. Mg(2+) is required as a cofactor.

It is found in the cytoplasm. It localises to the mitochondrion. The catalysed reaction is (2R)-3-phosphoglycerate + ATP = (2R)-3-phospho-glyceroyl phosphate + ADP. It functions in the pathway carbohydrate degradation; glycolysis; pyruvate from D-glyceraldehyde 3-phosphate: step 2/5. Catalyzes one of the two ATP producing reactions in the glycolytic pathway via the reversible conversion of 1,3-diphosphoglycerate to 3-phosphoglycerate. Both L- and D- forms of purine and pyrimidine nucleotides can be used as substrates, but the activity is much lower on pyrimidines. Negatively regulates the biosynthesis of acetyl-CoA from pyruvate in the mitochondrion. This Penicillium citrinum protein is Phosphoglycerate kinase (PGKA).